A 106-amino-acid polypeptide reads, in one-letter code: RNA-binding protein Hfq (106 aa).

The 60-residue stretch at 9 to 68 folds into the Sm domain; sequence DPYLNALRKERVPVSIYLVNGIKLQGQIESFDAFVILLRNNISQMVYKHAVSTIVPSRNI. The disordered stretch occupies residues 78–106; the sequence is EDEAGEEISAEYTPNAEGQAEATADPLYD.

This sequence belongs to the Hfq family. As to quaternary structure, homohexamer.

RNA chaperone that binds small regulatory RNA (sRNAs) and mRNAs to facilitate mRNA translational regulation in response to envelope stress, environmental stress and changes in metabolite concentrations. Also binds with high specificity to tRNAs. The protein is RNA-binding protein Hfq of Dichelobacter nodosus (strain VCS1703A).